A 344-amino-acid chain; its full sequence is Uroporphyrinogen decarboxylase (344 aa).

Residues 26 to 30 (RQAGR), F45, D75, Y151, S206, and H320 contribute to the substrate site.

The protein belongs to the uroporphyrinogen decarboxylase family. Homodimer.

It localises to the cytoplasm. The enzyme catalyses uroporphyrinogen III + 4 H(+) = coproporphyrinogen III + 4 CO2. It functions in the pathway porphyrin-containing compound metabolism; protoporphyrin-IX biosynthesis; coproporphyrinogen-III from 5-aminolevulinate: step 4/4. Functionally, catalyzes the decarboxylation of four acetate groups of uroporphyrinogen-III to yield coproporphyrinogen-III. In Staphylococcus haemolyticus (strain JCSC1435), this protein is Uroporphyrinogen decarboxylase.